A 65-amino-acid chain; its full sequence is Large ribosomal subunit protein bL35 (65 aa).

The disordered stretch occupies residues 20–42; that stretch reads GKVRRHHANASHIMTTKTTKRKR.

This sequence belongs to the bacterial ribosomal protein bL35 family.

The sequence is that of Large ribosomal subunit protein bL35 from Syntrophus aciditrophicus (strain SB).